Here is a 493-residue protein sequence, read N- to C-terminus: MERWRFSLMVFNNKLKHEYGIKKSLDSVSSIENTIENKDSNSKPNIKGRAQNIRSCGGRDNYSYNNIIYLFGVEYNRNLIPNDTFLFRDNKGDSFYISFNIENHIFEIDINFSCLSELEIERYFYSYHGFDYFNFNNGSAIEDYLYNHYMYDTPSNNHITSCIESYLQSQICVNPSIISDSSDSYIFGCFDKRRTHNESRRSGIRNRAQSSYLTIRESFNNLDSTKKYKHLWVQCENCYGLNYKKFLKSKINLCEQCGYHFKMSSSERIEVLVDPDTWYPMDEDMSSLDPIEFHSEEEPYKDRIYSYQKRTGLTEAVQTGLGQLNGIPIAIGVMDFQFMGGSMGSVVGEKITRLIEYATNKILPLIIVCASGGARMQEGSLSLMQMAKISSALFDYQSNKKLLYVSILTSPTTGGVTASFGMLGDIIIAEPNSYIAFAGKRVIEQTLHKIVPEGSQAAEYLFQKGLFDLIIPRNLLKSVLGELFKLHAFFPLN.

Residues L231–N493 enclose the CoA carboxyltransferase N-terminal domain. The Zn(2+) site is built by C235, C238, C254, and C257. The C4-type zinc finger occupies C235–C257.

Belongs to the AccD/PCCB family. In terms of assembly, acetyl-CoA carboxylase is a heterohexamer composed of biotin carboxyl carrier protein, biotin carboxylase and 2 subunits each of ACCase subunit alpha and ACCase plastid-coded subunit beta (accD). Requires Zn(2+) as cofactor.

The protein resides in the plastid stroma. The enzyme catalyses N(6)-carboxybiotinyl-L-lysyl-[protein] + acetyl-CoA = N(6)-biotinyl-L-lysyl-[protein] + malonyl-CoA. The protein operates within lipid metabolism; malonyl-CoA biosynthesis; malonyl-CoA from acetyl-CoA: step 1/1. Component of the acetyl coenzyme A carboxylase (ACC) complex. Biotin carboxylase (BC) catalyzes the carboxylation of biotin on its carrier protein (BCCP) and then the CO(2) group is transferred by the transcarboxylase to acetyl-CoA to form malonyl-CoA. The sequence is that of Acetyl-coenzyme A carboxylase carboxyl transferase subunit beta from Epifagus virginiana (Beechdrops).